Consider the following 276-residue polypeptide: MSRESERYWTLVHALIDRGVVSREQWQMVDPAQYQFYHRSKQRGFKVRHILRDVIRHMCWSRTLLDYMSSASTPSPDDVLRNPLYQLLLCNGYNPAVVGTALIRWAGHQSNRNTVWIRGTPMSGAPYLAQAIAYCSPLVGSVDWRNKSNPFEGCPDSLVFWWDGGYVYDCCVGLVKQVFRGEHVILPPEGLRGPNPCSELFRTPVLMYSQADICMTRLRSGELSAEHAVGLRDCMYLIRLTEDFDCAGGISCADVKQFVAWSREHPGEVRETHELK.

This is an uncharacterized protein from Fowl adenovirus A serotype 1 (strain CELO / Phelps) (FAdV-1).